The primary structure comprises 233 residues: Small ribosomal subunit protein uS3 (233 aa).

The KH type-2 domain maps to 39–107; that stretch reads VRQFLNKELE…PAQINIAEVR (69 aa).

This sequence belongs to the universal ribosomal protein uS3 family. Part of the 30S ribosomal subunit. Forms a tight complex with proteins S10 and S14.

In terms of biological role, binds the lower part of the 30S subunit head. Binds mRNA in the 70S ribosome, positioning it for translation. The sequence is that of Small ribosomal subunit protein uS3 from Edwardsiella ictaluri (strain 93-146).